Consider the following 179-residue polypeptide: Large ribosomal subunit protein uL5 (179 aa).

Belongs to the universal ribosomal protein uL5 family. Part of the 50S ribosomal subunit; part of the 5S rRNA/L5/L18/L25 subcomplex. Contacts the 5S rRNA and the P site tRNA. Forms a bridge to the 30S subunit in the 70S ribosome.

This is one of the proteins that bind and probably mediate the attachment of the 5S RNA into the large ribosomal subunit, where it forms part of the central protuberance. In the 70S ribosome it contacts protein S13 of the 30S subunit (bridge B1b), connecting the 2 subunits; this bridge is implicated in subunit movement. Contacts the P site tRNA; the 5S rRNA and some of its associated proteins might help stabilize positioning of ribosome-bound tRNAs. In Exiguobacterium sibiricum (strain DSM 17290 / CCUG 55495 / CIP 109462 / JCM 13490 / 255-15), this protein is Large ribosomal subunit protein uL5.